Reading from the N-terminus, the 1641-residue chain is Alpha-2-macroglobulin (1641 aa).

The signal sequence occupies residues Met-1–Gly-31. Cys-32 carries the N-palmitoyl cysteine lipid modification. Cys-32 is lipidated: S-diacylglycerol cysteine. Positions Cys-1166 to Gln-1169 form a cross-link, isoglutamyl cysteine thioester (Cys-Gln).

Belongs to the protease inhibitor I39 (alpha-2-macroglobulin) family. Bacterial alpha-2-macroglobulin subfamily.

It is found in the cell membrane. Functionally, protects the bacterial cell from host peptidases. The protein is Alpha-2-macroglobulin of Xylella fastidiosa (strain Temecula1 / ATCC 700964).